The sequence spans 79 residues: Small ribosomal subunit protein uS17 (79 aa).

Belongs to the universal ribosomal protein uS17 family. As to quaternary structure, part of the 30S ribosomal subunit.

In terms of biological role, one of the primary rRNA binding proteins, it binds specifically to the 5'-end of 16S ribosomal RNA. In Orientia tsutsugamushi (strain Ikeda) (Rickettsia tsutsugamushi), this protein is Small ribosomal subunit protein uS17.